We begin with the raw amino-acid sequence, 376 residues long: Thymidine kinase (376 aa).

The interval 1–39 is disordered; it reads MASYPCHQHASAFDQAARSRGHSNRRTALRPRRQQEATE. Positions 19–32 are enriched in basic residues; it reads SRGHSNRRTALRPR. 56 to 63 contributes to the ATP binding site; it reads GPHGMGKT. Catalysis depends on Glu-83, which acts as the Proton acceptor. Positions 101 and 125 each coordinate substrate. An ATP-binding site is contributed by Arg-216. Arg-222 contributes to the substrate binding site.

Belongs to the herpesviridae thymidine kinase family. Homodimer.

The enzyme catalyses thymidine + ATP = dTMP + ADP + H(+). Functionally, catalyzes the transfer of the gamma-phospho group of ATP to thymidine to generate dTMP in the salvage pathway of pyrimidine synthesis. The dTMP serves as a substrate for DNA polymerase during viral DNA replication. Allows the virus to be reactivated and to grow in non-proliferative cells lacking a high concentration of phosphorylated nucleic acid precursors. This chain is Thymidine kinase, found in Human herpesvirus 1 (strain CL101) (HHV-1).